The chain runs to 515 residues: Iroquois-class homeodomain protein IRX-4 (515 aa).

The homeobox; TALE-type DNA-binding region spans 144-205 (GTRRKNATRE…NARRRLKKEN (62 aa)). 3 disordered regions span residues 205–258 (NKMT…ELEL), 278–307 (TPFQ…STTL), and 398–425 (GPTG…RHQD). The span at 214 to 223 (KCADEKRPYG) shows a compositional bias: basic and acidic residues. The segment covering 224 to 236 (EGEEEEAGEEESR) has biased composition (acidic residues). Residues 237–257 (EEPLKSAKSEGHAGKDDKELE) are compositionally biased toward basic and acidic residues. Residues 399–419 (PTGVSATTPASSPAVTAPSGA) are compositionally biased toward low complexity.

This sequence belongs to the TALE/IRO homeobox family. As to quaternary structure, interacts with the vitamin D receptor VDR but doesn't affect its transactivation activity. As to expression, expressed in the developing central nervous system, skin, and vibrissae, but predominantly expressed in the cardiac ventricles of the developing heart. Not expressed in the developing metanephric kidney or adult kidney.

The protein localises to the nucleus. Functionally, likely to be an important mediator of ventricular differentiation during cardiac development. The polypeptide is Iroquois-class homeodomain protein IRX-4 (Irx4) (Mus musculus (Mouse)).